The sequence spans 871 residues: CRISPR system Cmr subunit Cmr2 (871 aa).

Residues 1 to 215 form a not required for target RNA cleavage region; sequence MVNIKEKLFV…THLDLTSALS (215 aa). His13, Asp14, and His25 together coordinate Mn(2+). 4 residues coordinate Zn(2+): Cys448, Cys451, Cys478, and Cys481. In terms of domain architecture, GGDEF spans 592-752; that stretch reads KYYAILVMDG…GKDTLAIGLL (161 aa). Residues Asp600, Glu656, Asp673, Asp674, Glu694, and Glu700 each contribute to the Mn(2+) site.

The protein belongs to the CRISPR system Cmr2 family. In terms of assembly, part of the type III-B Cmr ribonucleoprotein (RNP) complex, an elongated RNP with Cmr2 and Cmr3 as the base, with Cmr4 and Cmr5 forming a helical core along the mature crRNA (39 or 45 nt in length), while the complex is capped by Cmr6 and Cmr1. The 5' end of the crRNA is bound to Cmr2 and Cmr3, while Cmr6 and a Cmr1 subunit (Cmr1-1 or Cmr1-2) cap the 3' end of the crRNA. The target RNA lies antiparallel to the crRNA, with its 5' end near Cmr1 and Cmr6 and its 3' end near Cmr2 and Cmr3; major target cleavage occurs nears the junction of Cmr1/Cmr6 and Cmr4/Cmr, with minor cleavage occurring at 6 nt intervals which coincide with the proposed spacing of Cmr4 subunits. Forms a 1:1 complex with Cmr3. The Cmr2-Cmr3 complex non-specifically binds ss-target RNA and crRNA. Interacts with Cmr3, Cmr4 and Cmr5. The cofactor is Ca(2+). Mn(2+) is required as a cofactor. It depends on Zn(2+) as a cofactor.

It is found in the cytoplasm. Functionally, CRISPR (clustered regularly interspaced short palindromic repeat), is an adaptive immune system that provides protection against mobile genetic elements (viruses, transposable elements and conjugative plasmids). CRISPR clusters contain sequences complementary to antecedent mobile elements and target invading nucleic acids. CRISPR clusters are transcribed and processed into CRISPR RNA (crRNA), formerly called psiRNA (prokaryotic silencing) in this organism. Part of the Cmr ribonucleoprotein complex which has divalent cation-dependent endoribonuclease activity specific for ssRNA complementary to the crRNA (target RNA), generating 5' hydroxy- and 3' phosphate or 2'-3' cyclic phosphate termini. Cmr4 is probably the subunit that cleaves target RNA. Cmr complex does not cleave ssDNA complementary to the crRNA. Cleavage of target RNA is guided by the crRNA; substrate cleavage occurs a fixed distance (14 nt) from the 3' end of the crRNA. In vitro reconstitution shows Cmr1-2 and Cmr5 are not absolutely necessary for target cleavage. The chain is CRISPR system Cmr subunit Cmr2 from Pyrococcus furiosus (strain ATCC 43587 / DSM 3638 / JCM 8422 / Vc1).